The primary structure comprises 530 residues: Transcriptional regulator VasH (530 aa).

In terms of domain architecture, Sigma-54 factor interaction spans 193–422 (LIGESAAMQK…LKHLIEFGCA (230 aa)). ATP is bound by residues 221–228 (GETGTGKE) and 284–293 (ANGGTLFLDE).

In terms of biological role, transcriptional regulator of the type VI secretion system. The polypeptide is Transcriptional regulator VasH (Vibrio cholerae serotype O1 (strain ATCC 39315 / El Tor Inaba N16961)).